The primary structure comprises 196 residues: Protein LSM12 homolog A (196 aa).

Positions Ala3–Arg73 constitute a Sm domain. One can recognise an AD domain in the interval Ala81 to Glu175. Positions Val174–Ser196 are disordered. Polar residues predominate over residues Gln177 to Ser196.

Belongs to the LSM12 family.

This is Protein LSM12 homolog A (lsm12a) from Danio rerio (Zebrafish).